Here is a 181-residue protein sequence, read N- to C-terminus: Thioredoxin-like protein CITRX2, chloroplastic (181 aa).

A chloroplast-targeting transit peptide spans 1–70 (MQAATLSFQP…PDVATGKYVR (70 aa)). One can recognise a Thioredoxin domain in the interval 72-181 (DYLVKKVSAK…MMRDIINNDL (110 aa)). Active-site nucleophile residues include Cys104 and Cys107. Residues Cys104 and Cys107 are joined by a disulfide bond.

This sequence belongs to the thioredoxin family. Plant CITRX-type subfamily.

The protein resides in the plastid. Its subcellular location is the chloroplast. Its function is as follows. Probable thiol-disulfide oxidoreductase that may play a role in proper chloroplast development. This Nicotiana benthamiana protein is Thioredoxin-like protein CITRX2, chloroplastic.